The sequence spans 195 residues: Imidazoleglycerol-phosphate dehydratase (195 aa).

This sequence belongs to the imidazoleglycerol-phosphate dehydratase family.

The protein localises to the cytoplasm. The enzyme catalyses D-erythro-1-(imidazol-4-yl)glycerol 3-phosphate = 3-(imidazol-4-yl)-2-oxopropyl phosphate + H2O. Its pathway is amino-acid biosynthesis; L-histidine biosynthesis; L-histidine from 5-phospho-alpha-D-ribose 1-diphosphate: step 6/9. The polypeptide is Imidazoleglycerol-phosphate dehydratase (Methylorubrum populi (strain ATCC BAA-705 / NCIMB 13946 / BJ001) (Methylobacterium populi)).